A 475-amino-acid polypeptide reads, in one-letter code: Sulfate adenylyltransferase subunit 1 (475 aa).

Residues 24–240 (KSLLRFLTCG…ESAEVERELE (217 aa)) form the tr-type G domain. A G1 region spans residues 33–40 (GSVDDGKS). 33–40 (GSVDDGKS) contributes to the GTP binding site. The segment at 91 to 95 (GITID) is G2. The tract at residues 112–115 (DTPG) is G3. GTP contacts are provided by residues 112-116 (DTPGH) and 167-170 (NKMD). A G4 region spans residues 167-170 (NKMD). The tract at residues 204-206 (SAL) is G5.

This sequence belongs to the TRAFAC class translation factor GTPase superfamily. Classic translation factor GTPase family. CysN/NodQ subfamily. As to quaternary structure, heterodimer composed of CysD, the smaller subunit, and CysN.

The enzyme catalyses sulfate + ATP + H(+) = adenosine 5'-phosphosulfate + diphosphate. It participates in sulfur metabolism; hydrogen sulfide biosynthesis; sulfite from sulfate: step 1/3. In terms of biological role, with CysD forms the ATP sulfurylase (ATPS) that catalyzes the adenylation of sulfate producing adenosine 5'-phosphosulfate (APS) and diphosphate, the first enzymatic step in sulfur assimilation pathway. APS synthesis involves the formation of a high-energy phosphoric-sulfuric acid anhydride bond driven by GTP hydrolysis by CysN coupled to ATP hydrolysis by CysD. The polypeptide is Sulfate adenylyltransferase subunit 1 (Aeromonas hydrophila subsp. hydrophila (strain ATCC 7966 / DSM 30187 / BCRC 13018 / CCUG 14551 / JCM 1027 / KCTC 2358 / NCIMB 9240 / NCTC 8049)).